The following is a 189-amino-acid chain: Inosine triphosphate pyrophosphatase (189 aa).

14–19 provides a ligand contact to ITP; that stretch reads TGNQNK. Glutamate 42 contributes to the Mg(2+) binding site. Residues lysine 54, 70–71, lysine 87, 146–149, lysine 167, and 172–173 each bind ITP; these read DT, FGWD, and HR.

Belongs to the HAM1 NTPase family. In terms of assembly, homodimer. Requires Mg(2+) as cofactor. It depends on Mn(2+) as a cofactor.

Its subcellular location is the cytoplasm. The protein resides in the nucleus. The enzyme catalyses ITP + H2O = IMP + diphosphate + H(+). It catalyses the reaction dITP + H2O = dIMP + diphosphate + H(+). The catalysed reaction is XTP + H2O = XMP + diphosphate + H(+). Its function is as follows. Pyrophosphatase that hydrolyzes non-canonical purine nucleotides such as inosine triphosphate (ITP), deoxyinosine triphosphate (dITP) or xanthosine 5'-triphosphate (XTP) to their respective monophosphate derivatives. The enzyme does not distinguish between the deoxy- and ribose forms. Probably excludes non-canonical purines from RNA and DNA precursor pools, thus preventing their incorporation into RNA and DNA and avoiding chromosomal lesions. The sequence is that of Inosine triphosphate pyrophosphatase from Pyricularia oryzae (strain 70-15 / ATCC MYA-4617 / FGSC 8958) (Rice blast fungus).